Here is a 39-residue protein sequence, read N- to C-terminus: Natriuretic peptide CnNP-b (39 aa).

The propeptide occupies 1 to 8 (SGSKTATK). A disulfide bridge links Cys-12 with Cys-28. Residues 20–39 (IGSTSGMGCGGVPKPTPGGS) are disordered.

This sequence belongs to the natriuretic peptide family. Expressed by the venom gland.

It localises to the secreted. Its function is as follows. Snake venom natriuretic peptide that targets both NPR1 and NPR2. Exhibits hypotensive and vasodepressor activities. The sequence is that of Natriuretic peptide CnNP-b from Cryptophis nigrescens (Eastern small-eyed snake).